Consider the following 606-residue polypeptide: WD repeat-containing protein 1 (606 aa).

13 WD repeats span residues 4 to 45 (EIKK…LRNI), 48 to 87 (PAIA…IWDT), 93 to 135 (LLKY…LWDT), 138 to 176 (SVGE…FFEG), 180 to 218 (KFKF…IYDG), 224 to 263 (VCAL…IWDV), 270 to 306 (STFP…YLDK), 311 to 351 (KPLR…YWDS), 358 to 408 (SFSG…KLDV), 432 to 474 (LKDQ…VYSI), 480 to 518 (KDEG…VFSV), 523 to 561 (SENN…VWTL), and 566 to 604 (TKVK…EWTI). N6-acetyllysine is present on residues Lys28, Lys81, Lys95, and Lys115. Tyr238 bears the Phosphotyrosine mark. An N6-acetyllysine modification is found at Lys480.

Belongs to the WD repeat AIP1 family.

The protein localises to the cytoplasm. It is found in the cytoskeleton. Its subcellular location is the cell projection. It localises to the podosome. Induces disassembly of actin filaments in conjunction with ADF/cofilin family proteins. Enhances cofilin-mediated actin severing. Involved in cytokinesis. Involved in chemotactic cell migration by restricting lamellipodial membrane protrusions. Involved in myocardium sarcomere organization. Required for cardiomyocyte growth at the postnatal and maintenance at the adult stage. Involved in neutrophil actin dynamics and migration. Involved in megakaryocyte maturation and platelet shedding. Required for the establishment of planar cell polarity (PCP) during follicular epithelium development and for cell shape changes during PCP; the function seems to implicate cooperation with CFL1 and/or DSTN/ADF. Involved in the generation/maintenance of cortical tension. Involved in assembly and maintenance of epithelial apical cell junctions and plays a role in the organization of the perijunctional actomyosin belt. The polypeptide is WD repeat-containing protein 1 (Wdr1) (Mus musculus (Mouse)).